We begin with the raw amino-acid sequence, 378 residues long: Ecotin-like protein 3 (378 aa).

2 disordered regions span residues 191-216 and 238-378; these read HRLS…HAAP and PQNN…KADP. Polar residues predominate over residues 274–287; sequence NEPSPSRPRLSSTE. Residues 337-348 show a composition bias toward basic and acidic residues; it reads RKAEDNVYEKTM. The segment covering 362–378 has biased composition (low complexity); the sequence is KASASSKKSGNGSKADP.

This sequence belongs to the protease inhibitor I11 (ecotin) family.

This Leishmania infantum protein is Ecotin-like protein 3.